The chain runs to 243 residues: Small ribosomal subunit protein uS3 (243 aa).

A KH type-2 domain is found at 39–107; the sequence is IRAYLIKELK…ETHLNIVEVR (69 aa). The segment at 214-243 is disordered; sequence ASERRGLEGDAQGPASRERGDRPDRRRENA. The span at 229–243 shows a compositional bias: basic and acidic residues; it reads SRERGDRPDRRRENA.

The protein belongs to the universal ribosomal protein uS3 family. As to quaternary structure, part of the 30S ribosomal subunit. Forms a tight complex with proteins S10 and S14.

Its function is as follows. Binds the lower part of the 30S subunit head. Binds mRNA in the 70S ribosome, positioning it for translation. This Agrobacterium fabrum (strain C58 / ATCC 33970) (Agrobacterium tumefaciens (strain C58)) protein is Small ribosomal subunit protein uS3.